Reading from the N-terminus, the 396-residue chain is Elongation factor Tu (396 aa).

A tr-type G domain is found at 10 to 205; sequence KPHVNIGTIG…AVDESIPDPV (196 aa). The tract at residues 19–26 is G1; it reads GHVDHGKT. GTP is bound at residue 19–26; the sequence is GHVDHGKT. Thr26 lines the Mg(2+) pocket. Positions 62–66 are G2; the sequence is GITIN. The G3 stretch occupies residues 83–86; it reads DAPG. Residues 83 to 87 and 138 to 141 each bind GTP; these read DAPGH and NKAD. The tract at residues 138 to 141 is G4; the sequence is NKAD. The tract at residues 175–177 is G5; it reads SAL.

The protein belongs to the TRAFAC class translation factor GTPase superfamily. Classic translation factor GTPase family. EF-Tu/EF-1A subfamily. In terms of assembly, monomer.

It localises to the cytoplasm. The enzyme catalyses GTP + H2O = GDP + phosphate + H(+). Functionally, GTP hydrolase that promotes the GTP-dependent binding of aminoacyl-tRNA to the A-site of ribosomes during protein biosynthesis. The sequence is that of Elongation factor Tu from Mycobacterium sp. (strain JLS).